We begin with the raw amino-acid sequence, 2349 residues long: Reducing polyketide synthase AFT16-1 (2349 aa).

The segment covering 1–14 (MNGKSRDNGHDGKR) has biased composition (basic and acidic residues). Disordered regions lie at residues 1–21 (MNGK…VPAE) and 37–80 (TNPS…TSNS). A Ketosynthase family 3 (KS3) domain is found at 20-462 (AEPIAIVGTA…GTNAHTILES (443 aa)). Catalysis depends on for beta-ketoacyl synthase activity residues Cys-194, His-333, and His-382. The interval 578–888 (VFTGQGAQWP…LLYKGVLERF (311 aa)) is malonyl-CoA:ACP transacylase (MAT) domain. The interval 958 to 1092 (HPLLGFRSVD…GDILLSHFAK (135 aa)) is N-terminal hotdog fold. Residues 958-1263 (HPLLGFRSVD…QVEGLKFSCM (306 aa)) form a dehydratase (DH) domain region. The PKS/mFAS DH domain occupies 958–1269 (HPLLGFRSVD…FSCMYPAQET (312 aa)). His-990 functions as the Proton acceptor; for dehydratase activity in the catalytic mechanism. The segment at 1111–1269 (MSSVEPSLFY…FSCMYPAQET (159 aa)) is C-terminal hotdog fold. Asp-1170 acts as the Proton donor; for dehydratase activity in catalysis. The ketoreductase (KR) domain stretch occupies residues 1976 to 2164 (SPNKTYLLVG…VVGVGYVARA (189 aa)). The Carrier domain occupies 2273-2347 (EILSGSLKQK…GLCLEAIGQW (75 aa)). Ser-2307 carries the post-translational modification O-(pantetheine 4'-phosphoryl)serine.

It functions in the pathway mycotoxin biosynthesis. Reducing polyketide synthase; part of the gene clusters that mediate the biosynthesis of the host-selective toxins (HSTs) AF-toxins responsible for Alternaria black spot of strawberry disease by the strawberry pathotype. AF-toxin I and III are valine derivatives of 2,3-dyhydroxy-isovaleric acid and 2-hydroxy-isovaleric acid respectively, while AF II is an isoleucine derivative of 2-hydroxy-valeric acid. These derivatives are bound to a 9,10-epoxy-8-hydroxy-9-methyl-decatrienoic acid (EDA) moiety. On cellular level, AF-toxins affect plasma membrane of susceptible cells and cause a sudden increase in loss of K(+) after a few minutes of toxin treatment. The aldo-keto reductase AFTS1 catalyzes the conversion of 2-keto-isovaleric acid (2-KIV) to 2-hydroxy-isovaleric acid (2-HIV) by reduction of its ketone to an alcohol. The acyl-CoA ligase AFT1, the hydrolase AFT2 and the enoyl-CoA hydratases AFT3 and AFT6, but also the polyketide synthase AFT9, the acyl-CoA dehydrogenase AFT10, the cytochrome P450 monooxygenase AFT11 and the oxidoreductase AFT12 are all involved in the biosynthesis of the AK-, AF- and ACT-toxin common EDA structural moiety. The exact function of each enzyme, and of additional enzymes identified within the AF-toxin clusters have still to be determined. The polypeptide is Reducing polyketide synthase AFT16-1 (Alternaria alternata (Alternaria rot fungus)).